A 194-amino-acid chain; its full sequence is A-type ATP synthase subunit E (194 aa).

It belongs to the V-ATPase E subunit family. In terms of assembly, has multiple subunits with at least A(3), B(3), C, D, E, F, H, I and proteolipid K(x).

The protein resides in the cell membrane. Functionally, component of the A-type ATP synthase that produces ATP from ADP in the presence of a proton gradient across the membrane. The chain is A-type ATP synthase subunit E from Saccharolobus islandicus (strain Y.N.15.51 / Yellowstone #2) (Sulfolobus islandicus).